We begin with the raw amino-acid sequence, 158 residues long: ATP synthase subunit b', chloroplastic (158 aa).

Residues 25 to 45 (ATLPLMALQFIILTTILNFIF) traverse the membrane as a helical segment.

Belongs to the ATPase B chain family. F-type ATPases have 2 components, F(1) - the catalytic core - and F(0) - the membrane proton channel. F(1) has five subunits: alpha(3), beta(3), gamma(1), delta(1), epsilon(1). F(0) has four main subunits: a(1), b(1), b'(1) and c(10-14). The alpha and beta chains form an alternating ring which encloses part of the gamma chain. F(1) is attached to F(0) by a central stalk formed by the gamma and epsilon chains, while a peripheral stalk is formed by the delta, b and b' chains.

The protein resides in the plastid. It localises to the chloroplast thylakoid membrane. In terms of biological role, f(1)F(0) ATP synthase produces ATP from ADP in the presence of a proton or sodium gradient. F-type ATPases consist of two structural domains, F(1) containing the extramembraneous catalytic core and F(0) containing the membrane proton channel, linked together by a central stalk and a peripheral stalk. During catalysis, ATP synthesis in the catalytic domain of F(1) is coupled via a rotary mechanism of the central stalk subunits to proton translocation. Functionally, component of the F(0) channel, it forms part of the peripheral stalk, linking F(1) to F(0). The b'-subunit is a diverged and duplicated form of b found in plants and photosynthetic bacteria. This is ATP synthase subunit b', chloroplastic from Gracilaria tenuistipitata var. liui (Red alga).